The sequence spans 180 residues: Acireductone dioxygenase (180 aa).

4 residues coordinate Fe(2+): His97, His99, Glu103, and His141. Ni(2+)-binding residues include His97, His99, Glu103, and His141.

It belongs to the acireductone dioxygenase (ARD) family. In terms of assembly, monomer. Fe(2+) serves as cofactor. Requires Ni(2+) as cofactor.

The enzyme catalyses 1,2-dihydroxy-5-(methylsulfanyl)pent-1-en-3-one + O2 = 3-(methylsulfanyl)propanoate + CO + formate + 2 H(+). It catalyses the reaction 1,2-dihydroxy-5-(methylsulfanyl)pent-1-en-3-one + O2 = 4-methylsulfanyl-2-oxobutanoate + formate + 2 H(+). The protein operates within amino-acid biosynthesis; L-methionine biosynthesis via salvage pathway; L-methionine from S-methyl-5-thio-alpha-D-ribose 1-phosphate: step 5/6. Functionally, catalyzes 2 different reactions between oxygen and the acireductone 1,2-dihydroxy-3-keto-5-methylthiopentene (DHK-MTPene) depending upon the metal bound in the active site. Fe-containing acireductone dioxygenase (Fe-ARD) produces formate and 2-keto-4-methylthiobutyrate (KMTB), the alpha-ketoacid precursor of methionine in the methionine recycle pathway. Ni-containing acireductone dioxygenase (Ni-ARD) produces methylthiopropionate, carbon monoxide and formate, and does not lie on the methionine recycle pathway. This chain is Acireductone dioxygenase, found in Serratia proteamaculans (strain 568).